Reading from the N-terminus, the 331-residue chain is Ferrochelatase (331 aa).

The Fe cation site is built by H187 and E286.

It belongs to the ferrochelatase family.

It localises to the cytoplasm. The enzyme catalyses heme b + 2 H(+) = protoporphyrin IX + Fe(2+). It participates in porphyrin-containing compound metabolism; protoheme biosynthesis; protoheme from protoporphyrin-IX: step 1/1. In terms of biological role, catalyzes the ferrous insertion into protoporphyrin IX. The polypeptide is Ferrochelatase (Legionella pneumophila (strain Lens)).